The primary structure comprises 191 residues: Protein 2 in picA locus (191 aa).

It belongs to the acyltransferase 3 family.

It is found in the cell membrane. Seems to regulate the surface properties of the bacterium in the presence of plant cells or plant cell extracts. The chain is Protein 2 in picA locus from Rhizobium radiobacter (Agrobacterium tumefaciens).